The following is an 869-amino-acid chain: Retrovirus-related Pol polyprotein from type-1 retrotransposable element R2 (869 aa).

Positions 199-475 (IFVFYGRVPS…DLWKYLGVVY (277 aa)) constitute a Reverse transcriptase domain. The segment at 601–869 (LYASISHSCK…FNNVTTVVHW (269 aa)) is nucleic acid-binding endonuclease.

It catalyses the reaction DNA(n) + a 2'-deoxyribonucleoside 5'-triphosphate = DNA(n+1) + diphosphate. The chain is Retrovirus-related Pol polyprotein from type-1 retrotransposable element R2 from Bradysia coprophila (Dark-winged fungus gnat).